Consider the following 213-residue polypeptide: RNA chaperone ProQ (213 aa).

The tract at residues 105–150 (ESQEKAKAKRAAQTPKAAPAGKAPAKKAPKKVAVPARKTERPAKAA) is disordered. Positions 115-127 (AAQTPKAAPAGKA) are enriched in low complexity.

The protein belongs to the ProQ family.

It localises to the cytoplasm. Its function is as follows. RNA chaperone with significant RNA binding, RNA strand exchange and RNA duplexing activities. This chain is RNA chaperone ProQ, found in Shewanella oneidensis (strain ATCC 700550 / JCM 31522 / CIP 106686 / LMG 19005 / NCIMB 14063 / MR-1).